The primary structure comprises 350 residues: Phenylalanine--tRNA ligase alpha subunit (350 aa).

E262 contributes to the Mg(2+) binding site.

The protein belongs to the class-II aminoacyl-tRNA synthetase family. Phe-tRNA synthetase alpha subunit type 1 subfamily. Tetramer of two alpha and two beta subunits. Requires Mg(2+) as cofactor.

The protein localises to the cytoplasm. The enzyme catalyses tRNA(Phe) + L-phenylalanine + ATP = L-phenylalanyl-tRNA(Phe) + AMP + diphosphate + H(+). This is Phenylalanine--tRNA ligase alpha subunit from Thermus thermophilus (strain ATCC BAA-163 / DSM 7039 / HB27).